The following is a 554-amino-acid chain: Phosphomethylpyrimidine synthase (554 aa).

Substrate contacts are provided by residues asparagine 191, methionine 220, tyrosine 249, histidine 285, 305-307 (SRG), 346-349 (DGLR), and glutamate 385. A Zn(2+)-binding site is contributed by histidine 389. Position 412 (tyrosine 412) interacts with substrate. Histidine 453 lines the Zn(2+) pocket. Positions 533, 536, and 541 each coordinate [4Fe-4S] cluster.

The protein belongs to the ThiC family. As to quaternary structure, homodimer. The cofactor is [4Fe-4S] cluster.

The enzyme catalyses 5-amino-1-(5-phospho-beta-D-ribosyl)imidazole + S-adenosyl-L-methionine = 4-amino-2-methyl-5-(phosphooxymethyl)pyrimidine + CO + 5'-deoxyadenosine + formate + L-methionine + 3 H(+). Its pathway is cofactor biosynthesis; thiamine diphosphate biosynthesis. Its function is as follows. Catalyzes the synthesis of the hydroxymethylpyrimidine phosphate (HMP-P) moiety of thiamine from aminoimidazole ribotide (AIR) in a radical S-adenosyl-L-methionine (SAM)-dependent reaction. The chain is Phosphomethylpyrimidine synthase from Ehrlichia chaffeensis (strain ATCC CRL-10679 / Arkansas).